Reading from the N-terminus, the 241-residue chain is 1-(5-phosphoribosyl)-5-[(5-phosphoribosylamino)methylideneamino] imidazole-4-carboxamide isomerase (241 aa).

Asp8 (proton acceptor) is an active-site residue. Asp131 acts as the Proton donor in catalysis.

The protein belongs to the HisA/HisF family.

It is found in the cytoplasm. It catalyses the reaction 1-(5-phospho-beta-D-ribosyl)-5-[(5-phospho-beta-D-ribosylamino)methylideneamino]imidazole-4-carboxamide = 5-[(5-phospho-1-deoxy-D-ribulos-1-ylimino)methylamino]-1-(5-phospho-beta-D-ribosyl)imidazole-4-carboxamide. It functions in the pathway amino-acid biosynthesis; L-histidine biosynthesis; L-histidine from 5-phospho-alpha-D-ribose 1-diphosphate: step 4/9. This is 1-(5-phosphoribosyl)-5-[(5-phosphoribosylamino)methylideneamino] imidazole-4-carboxamide isomerase from Sorangium cellulosum (strain So ce56) (Polyangium cellulosum (strain So ce56)).